The primary structure comprises 327 residues: GMP reductase (327 aa).

Cys176 serves as the catalytic Thioimidate intermediate. 205–228 contributes to the NADP(+) binding site; the sequence is IIADGGIRTHGDIAKSIRFGASMV.

It belongs to the IMPDH/GMPR family. GuaC type 2 subfamily.

It carries out the reaction IMP + NH4(+) + NADP(+) = GMP + NADPH + 2 H(+). Catalyzes the irreversible NADPH-dependent deamination of GMP to IMP. It functions in the conversion of nucleobase, nucleoside and nucleotide derivatives of G to A nucleotides, and in maintaining the intracellular balance of A and G nucleotides. The polypeptide is GMP reductase (Streptococcus pyogenes serotype M28 (strain MGAS6180)).